A 359-amino-acid chain; its full sequence is 4-dedimethylamino-4-oxo-anhydrotetracycline transaminase OxyQ (359 aa).

Substrate-binding residues include Gly32, Lys92, and Asn155. Pyridoxal 5'-phosphate-binding positions include Thr91–Lys92, Asn155, Tyr186, and Ser216–Ser218. Lys219 carries the post-translational modification N6-(pyridoxal phosphate)lysine. Arg227 is a pyridoxal 5'-phosphate binding site. Residue Arg341 coordinates substrate.

The protein belongs to the class-I pyridoxal-phosphate-dependent aminotransferase family. Pyridoxal 5'-phosphate is required as a cofactor.

Its pathway is antibiotic biosynthesis; oxytetracycline biosynthesis. In terms of biological role, involved in the biosynthesis of the tetracycline antibiotic, oxytetracycline. Catalyzes the conversion of 4-dedimethylamino-4-oxoanhydrotetracycline to yield 4-amino-4-de(dimethylamino)anhydrotetracycline (4-amino-ATC). This Streptomyces rimosus protein is 4-dedimethylamino-4-oxo-anhydrotetracycline transaminase OxyQ.